Consider the following 120-residue polypeptide: Large ribosomal subunit protein bL20 (120 aa).

It belongs to the bacterial ribosomal protein bL20 family.

In terms of biological role, binds directly to 23S ribosomal RNA and is necessary for the in vitro assembly process of the 50S ribosomal subunit. It is not involved in the protein synthesizing functions of that subunit. The sequence is that of Large ribosomal subunit protein bL20 from Xanthobacter autotrophicus (strain ATCC BAA-1158 / Py2).